Consider the following 441-residue polypeptide: Plasmepsin VI (441 aa).

Over 1 to 7 (MTNFCIK) the chain is Cytoplasmic. The chain crosses the membrane as a helical; Signal-anchor for type II membrane protein span at residues 8-28 (SYLFLYLSFLLFFDIITIFHV). The Extracellular portion of the chain corresponds to 29–441 (SSIRISTVLK…VGVVKSNHNF (413 aa)). Residues 109-435 (FIGDIEIGNP…DNDHKLVGVV (327 aa)) form the Peptidase A1 domain. Residues Asp-127 and Asp-324 contribute to the active site.

It belongs to the peptidase A1 family.

The protein resides in the membrane. In terms of biological role, during the development in the mosquito midgut, plays a role in sporozoite egress from oocysts. This Plasmodium berghei (strain Anka) protein is Plasmepsin VI.